The sequence spans 385 residues: Lipid-A-disaccharide synthase (385 aa).

This sequence belongs to the LpxB family.

It catalyses the reaction a lipid X + a UDP-2-N,3-O-bis[(3R)-3-hydroxyacyl]-alpha-D-glucosamine = a lipid A disaccharide + UDP + H(+). It participates in bacterial outer membrane biogenesis; LPS lipid A biosynthesis. Condensation of UDP-2,3-diacylglucosamine and 2,3-diacylglucosamine-1-phosphate to form lipid A disaccharide, a precursor of lipid A, a phosphorylated glycolipid that anchors the lipopolysaccharide to the outer membrane of the cell. This Rickettsia canadensis (strain McKiel) protein is Lipid-A-disaccharide synthase.